Here is a 640-residue protein sequence, read N- to C-terminus: EF-hand domain-containing protein 1 (640 aa).

Residues 1-45 (MVSNPVHGLPFLPGTSFKDSTKTAFHRSQTLSYRNGYAIVRRPTV) form a required for its localization in the mitotic spindle and interaction with alpha-tubulin region. 3 consecutive DM10 domains span residues 93 to 198 (DKKV…ESQG), 239 to 359 (DKQV…KEKF), and 416 to 520 (DNKV…ESNA). A disordered region spans residues 535–554 (VRKREAPAPEAESKQTEKDP). The segment covering 538–554 (REAPAPEAESKQTEKDP) has biased composition (basic and acidic residues). Positions 574–609 (SCKDNIREAFQIYDKEASGYVDRDMFFKICESLNVP) constitute an EF-hand domain.

Microtubule inner protein component of sperm flagellar doublet microtubules. Interacts with the C-terminus of CACNA1E. Interacts with alpha-tubulin. As to expression, widely expressed. Not detected in lymphocytes.

The protein resides in the cytoplasm. It localises to the cytoskeleton. Its subcellular location is the cilium axoneme. The protein localises to the flagellum axoneme. It is found in the microtubule organizing center. The protein resides in the centrosome. It localises to the spindle. Its subcellular location is the spindle pole. Functionally, microtubule inner protein (MIP) part of the dynein-decorated doublet microtubules (DMTs) in cilia axoneme, which is required for motile cilia beating. Microtubule-associated protein which regulates cell division and neuronal migration during cortical development. Necessary for radial and tangential cell migration during brain development, possibly acting as a regulator of cell morphology and process formation during migration. May enhance calcium influx through CACNA1E and stimulate programmed cell death. The polypeptide is EF-hand domain-containing protein 1 (Homo sapiens (Human)).